The following is a 446-amino-acid chain: Phosphoglucosamine mutase (446 aa).

The active-site Phosphoserine intermediate is the S103. Mg(2+) is bound by residues S103, D242, D244, and D246. S103 bears the Phosphoserine mark.

It belongs to the phosphohexose mutase family. Mg(2+) serves as cofactor. Activated by phosphorylation.

The enzyme catalyses alpha-D-glucosamine 1-phosphate = D-glucosamine 6-phosphate. Functionally, catalyzes the conversion of glucosamine-6-phosphate to glucosamine-1-phosphate. This Vibrio atlanticus (strain LGP32) (Vibrio splendidus (strain Mel32)) protein is Phosphoglucosamine mutase.